Consider the following 247-residue polypeptide: uncharacterized protein (247 aa).

2 helical membrane-spanning segments follow: residues 9-29 (IIAI…FLIF) and 37-57 (SYFL…SLII).

Its subcellular location is the cell membrane. This is an uncharacterized protein from Methanocaldococcus jannaschii (strain ATCC 43067 / DSM 2661 / JAL-1 / JCM 10045 / NBRC 100440) (Methanococcus jannaschii).